The following is a 417-amino-acid chain: MFSSTTLHHLPRPNLLLPRKVISRRMSTNPAIEPKVRKFESVEGVDIGSRNKSDGFFAIPLYLSKLVALYNCISLSRIGTSNENFVFSGIRFRLVSYNILAQVYVKSALLPHSPPACLKWKARSHAILSVLKNLQADFFCLQEVDEYDSFYRNNMDSLGYSGIYIQRTGQRKRDGCAIFYKPSCAELVTKERIEYNDLVDSIKADSVSCSEQKIETSNEGKDSRKDSRDLNDPLVRLKRDCVGIMAAFRINKPFQHIVIVANTHLYWDPELADVKLAQAKYLLSRLAQFKTLISDEFECTPSLLLAGDFNSIPGDMVYSYLVSGNAKPTETIEEEEAPVPLSSVYEVTRGEPKFTNCTPGFTNTLDYIFISPSDFIKPVSILQLPEPDSPDVVGFLPNHHHPSDHLPIGAEFEIRRE.

Phe2 carries the post-translational modification N-acetylserine. Glu143 provides a ligand contact to Mg(2+).

The protein belongs to the CCR4/nocturin family. As to quaternary structure, component of the CCR4-NOT complex, at least composed of CRR4 and CAF1 proteins. Forms homooligomers. Mg(2+) serves as cofactor.

It is found in the nucleus. It localises to the cytoplasm. It catalyses the reaction Exonucleolytic cleavage of poly(A) to 5'-AMP.. Functionally, acts as a catalytic component of the CCR4-NOT core complex, which in the nucleus seems to be a general transcription factor, and in the cytoplasm the major mRNA deadenylase involved in mRNA turnover. Transcriptional regulator of circadian rhythms with poly(A)-degrading activity that affects the expression and rhythmicity of the clock core oscillator genes TOC1 and CCA1. Deadenylation may be a mechanism involved in the regulation of the circadian clock. May play a negative role in response against oxidative stress. Possesses magnesium-dependent poly(A)-specific exoribonuclease activity in vitro and is almost inactive with poly(U), poly(C) and poly(G) as substrates. The protein is Carbon catabolite repressor protein 4 homolog 4 of Arabidopsis thaliana (Mouse-ear cress).